A 187-amino-acid chain; its full sequence is UPF0340 protein str1894 (187 aa).

It belongs to the UPF0340 family.

In Streptococcus thermophilus (strain CNRZ 1066), this protein is UPF0340 protein str1894.